Reading from the N-terminus, the 461-residue chain is Bifunctional protein GlmU (461 aa).

Residues 1–229 (MNKYVVILAA…FSESLGVNDR (229 aa)) are pyrophosphorylase. Residues 8–11 (LAAG), Lys22, Gln72, and 77–78 (GT) each bind UDP-N-acetyl-alpha-D-glucosamine. Asp102 is a Mg(2+) binding site. The UDP-N-acetyl-alpha-D-glucosamine site is built by Gly139, Glu154, Asn169, and Asn227. Asn227 lines the Mg(2+) pocket. The linker stretch occupies residues 230 to 250 (IALAQATKIMQRRINEEHMKN). The segment at 251 to 461 (GVSFIDPDTA…LPLSKDKEWE (211 aa)) is N-acetyltransferase. UDP-N-acetyl-alpha-D-glucosamine is bound by residues Arg332 and Lys350. The Proton acceptor role is filled by His362. Residues Tyr365 and Asn376 each coordinate UDP-N-acetyl-alpha-D-glucosamine. Acetyl-CoA-binding positions include 385 to 386 (NY), Ala422, and Arg439.

The protein in the N-terminal section; belongs to the N-acetylglucosamine-1-phosphate uridyltransferase family. This sequence in the C-terminal section; belongs to the transferase hexapeptide repeat family. As to quaternary structure, homotrimer. Mg(2+) is required as a cofactor.

The protein localises to the cytoplasm. It catalyses the reaction alpha-D-glucosamine 1-phosphate + acetyl-CoA = N-acetyl-alpha-D-glucosamine 1-phosphate + CoA + H(+). It carries out the reaction N-acetyl-alpha-D-glucosamine 1-phosphate + UTP + H(+) = UDP-N-acetyl-alpha-D-glucosamine + diphosphate. It functions in the pathway nucleotide-sugar biosynthesis; UDP-N-acetyl-alpha-D-glucosamine biosynthesis; N-acetyl-alpha-D-glucosamine 1-phosphate from alpha-D-glucosamine 6-phosphate (route II): step 2/2. It participates in nucleotide-sugar biosynthesis; UDP-N-acetyl-alpha-D-glucosamine biosynthesis; UDP-N-acetyl-alpha-D-glucosamine from N-acetyl-alpha-D-glucosamine 1-phosphate: step 1/1. The protein operates within bacterial outer membrane biogenesis; LPS lipid A biosynthesis. In terms of biological role, catalyzes the last two sequential reactions in the de novo biosynthetic pathway for UDP-N-acetylglucosamine (UDP-GlcNAc). The C-terminal domain catalyzes the transfer of acetyl group from acetyl coenzyme A to glucosamine-1-phosphate (GlcN-1-P) to produce N-acetylglucosamine-1-phosphate (GlcNAc-1-P), which is converted into UDP-GlcNAc by the transfer of uridine 5-monophosphate (from uridine 5-triphosphate), a reaction catalyzed by the N-terminal domain. The polypeptide is Bifunctional protein GlmU (Lactobacillus gasseri (strain ATCC 33323 / DSM 20243 / BCRC 14619 / CIP 102991 / JCM 1131 / KCTC 3163 / NCIMB 11718 / NCTC 13722 / AM63)).